The following is a 261-amino-acid chain: Endonuclease NucS (261 aa).

It belongs to the NucS endonuclease family.

The protein resides in the cytoplasm. Cleaves both 3' and 5' ssDNA extremities of branched DNA structures. The chain is Endonuclease NucS from Aeropyrum pernix (strain ATCC 700893 / DSM 11879 / JCM 9820 / NBRC 100138 / K1).